We begin with the raw amino-acid sequence, 294 residues long: Cell division protein ZipA (294 aa).

Residue methionine 1 is a topological domain, periplasmic. A helical transmembrane segment spans residues 2 to 22 (EIGLREWLILIGIIVIAGILF). At 23–294 (DGWRRMRGGK…FERRALTQKR (272 aa)) the chain is on the cytoplasmic side. The disordered stretch occupies residues 47–107 (PDEEGSAEVL…GKRAAEMQPQ (61 aa)). Residues 82 to 91 (AREREREQKP) show a composition bias toward basic and acidic residues.

This sequence belongs to the ZipA family. In terms of assembly, interacts with FtsZ via their C-terminal domains.

It is found in the cell inner membrane. Functionally, essential cell division protein that stabilizes the FtsZ protofilaments by cross-linking them and that serves as a cytoplasmic membrane anchor for the Z ring. Also required for the recruitment to the septal ring of downstream cell division proteins. This Pseudomonas putida (strain W619) protein is Cell division protein ZipA.